A 126-amino-acid chain; its full sequence is S-adenosylmethionine decarboxylase proenzyme (126 aa).

Catalysis depends on Ser-63, which acts as the Schiff-base intermediate with substrate; via pyruvic acid. Ser-63 carries the post-translational modification Pyruvic acid (Ser); by autocatalysis. His-68 acts as the Proton acceptor; for processing activity in catalysis. Cys-83 serves as the catalytic Proton donor; for catalytic activity.

The protein belongs to the prokaryotic AdoMetDC family. Type 1 subfamily. In terms of assembly, heterotetramer of two alpha and two beta chains arranged as a dimer of alpha/beta heterodimers. The cofactor is pyruvate. Is synthesized initially as an inactive proenzyme. Formation of the active enzyme involves a self-maturation process in which the active site pyruvoyl group is generated from an internal serine residue via an autocatalytic post-translational modification. Two non-identical subunits are generated from the proenzyme in this reaction, and the pyruvate is formed at the N-terminus of the alpha chain, which is derived from the carboxyl end of the proenzyme. The post-translation cleavage follows an unusual pathway, termed non-hydrolytic serinolysis, in which the side chain hydroxyl group of the serine supplies its oxygen atom to form the C-terminus of the beta chain, while the remainder of the serine residue undergoes an oxidative deamination to produce ammonia and the pyruvoyl group blocking the N-terminus of the alpha chain.

It catalyses the reaction S-adenosyl-L-methionine + H(+) = S-adenosyl 3-(methylsulfanyl)propylamine + CO2. Its pathway is amine and polyamine biosynthesis; S-adenosylmethioninamine biosynthesis; S-adenosylmethioninamine from S-adenosyl-L-methionine: step 1/1. Functionally, catalyzes the decarboxylation of S-adenosylmethionine to S-adenosylmethioninamine (dcAdoMet), the propylamine donor required for the synthesis of the polyamines spermine and spermidine from the diamine putrescine. This chain is S-adenosylmethionine decarboxylase proenzyme, found in Pelotomaculum thermopropionicum (strain DSM 13744 / JCM 10971 / SI).